Reading from the N-terminus, the 390-residue chain is tRNA-specific 2-thiouridylase MnmA (390 aa).

ATP-binding positions include 33–40 (AMSGGVDS) and Met-59. The active-site Nucleophile is the Cys-131. Cys-131 and Cys-230 are joined by a disulfide. Gly-155 is an ATP binding site. The tract at residues 180-182 (KDQ) is interaction with tRNA. Cys-230 functions as the Cysteine persulfide intermediate in the catalytic mechanism.

The protein belongs to the MnmA/TRMU family.

It is found in the cytoplasm. It catalyses the reaction S-sulfanyl-L-cysteinyl-[protein] + uridine(34) in tRNA + AH2 + ATP = 2-thiouridine(34) in tRNA + L-cysteinyl-[protein] + A + AMP + diphosphate + H(+). In terms of biological role, catalyzes the 2-thiolation of uridine at the wobble position (U34) of tRNA, leading to the formation of s(2)U34. This is tRNA-specific 2-thiouridylase MnmA from Symbiobacterium thermophilum (strain DSM 24528 / JCM 14929 / IAM 14863 / T).